The following is a 209-amino-acid chain: 3-demethoxyubiquinol 3-hydroxylase (209 aa).

A compositionally biased stretch (low complexity) spans 23–36; sequence PHATRAAPAPAQAP. The disordered stretch occupies residues 23 to 42; sequence PHATRAAPAPAQAPGEMTDS. 6 residues coordinate Fe cation: glutamate 58, glutamate 88, histidine 91, glutamate 140, glutamate 172, and histidine 175.

This sequence belongs to the COQ7 family. It depends on Fe cation as a cofactor.

It is found in the cell membrane. It carries out the reaction a 5-methoxy-2-methyl-3-(all-trans-polyprenyl)benzene-1,4-diol + AH2 + O2 = a 3-demethylubiquinol + A + H2O. It functions in the pathway cofactor biosynthesis; ubiquinone biosynthesis. Functionally, catalyzes the hydroxylation of 2-nonaprenyl-3-methyl-6-methoxy-1,4-benzoquinol during ubiquinone biosynthesis. The protein is 3-demethoxyubiquinol 3-hydroxylase of Variovorax paradoxus (strain S110).